Consider the following 258-residue polypeptide: Lyso-ornithine lipid O-acyltransferase (258 aa).

Residues 7–29 form a helical membrane-spanning segment; it reads LLRSARLLGLVALGLGLAAWVSL.

It belongs to the 1-acyl-sn-glycerol-3-phosphate acyltransferase family. OlsA subfamily.

The protein localises to the membrane. The catalysed reaction is a lyso-ornithine lipid + a fatty acyl-[ACP] = an N(2)-[(3R)-3-(acyloxy)acyl]-L-ornithine lipid + holo-[ACP]. Its pathway is lipid metabolism. Its function is as follows. Catalyzes the second step in the formation of ornithine lipids, which are phosphorus-free membrane lipids. Uses acyl-acyl carrier protein (acyl-AcpP) as an acyl donor and converts lyso-ornithine lipid (LOL) into ornithine lipid (OL). The protein is Lyso-ornithine lipid O-acyltransferase of Pseudomonas aeruginosa (strain ATCC 15692 / DSM 22644 / CIP 104116 / JCM 14847 / LMG 12228 / 1C / PRS 101 / PAO1).